The primary structure comprises 394 residues: uncharacterized protein (394 aa).

12 helical membrane passes run 13 to 33, 35 to 55, 73 to 95, 110 to 130, 152 to 172, 179 to 198, 216 to 236, 241 to 261, 267 to 287, 293 to 313, 340 to 360, and 372 to 392; these read LITT…TTMI, MAPT…VLPT, TTMT…TLTV, ALTV…HMVL, IHMV…PTVL, LMVL…TLTV, VLLA…TVLP, VLMV…HMVL, VLMV…PTVL, VLMV…TLTV, MMTL…VTTI, and ILLC…YVSA.

The protein resides in the membrane. This is an uncharacterized protein from Saccharomyces cerevisiae (strain ATCC 204508 / S288c) (Baker's yeast).